We begin with the raw amino-acid sequence, 1005 residues long: Probable beta-galactosidase A (1005 aa).

A signal peptide spans 1 to 18 (MKLLSVAAVALLAAQAAG). Substrate is bound by residues Y96, N140, A141, and E142. The N-linked (GlcNAc...) asparagine glycan is linked to N156. N199 provides a ligand contact to substrate. E200 serves as the catalytic Proton donor. A disulfide bridge connects residues C205 and C206. Position 260 (Y260) interacts with substrate. A disulfide bridge connects residues C266 and C315. The active-site Nucleophile is E298. Position 364 (Y364) interacts with substrate. N373, N402, N453, N478, N522, N622, N760, N777, N805, and N914 each carry an N-linked (GlcNAc...) asparagine glycan.

Belongs to the glycosyl hydrolase 35 family.

It is found in the secreted. It carries out the reaction Hydrolysis of terminal non-reducing beta-D-galactose residues in beta-D-galactosides.. Its function is as follows. Cleaves beta-linked terminal galactosyl residues from gangliosides, glycoproteins, and glycosaminoglycans. In Aspergillus flavus (strain ATCC 200026 / FGSC A1120 / IAM 13836 / NRRL 3357 / JCM 12722 / SRRC 167), this protein is Probable beta-galactosidase A (lacA).